We begin with the raw amino-acid sequence, 876 residues long: Aspartate--tRNA(Asp/Asn) ligase (876 aa).

Residues 1-278 (MAATDTPWRP…FGFKRAYEGF (278 aa)) form a unknown region. An aspartyl-tRNA synthetase region spans residues 279–876 (MHVYRSHTCG…PKPKKEVKEG (598 aa)). Residue E453 coordinates L-aspartate. The aspartate stretch occupies residues 477-480 (QQFK). Residues R499 and H729 each coordinate L-aspartate. 499–501 (RDE) contacts ATP. E763 is a binding site for ATP. R770 lines the L-aspartate pocket. Position 815–818 (815–818 (GVDR)) interacts with ATP.

Belongs to the class-II aminoacyl-tRNA synthetase family. Type 1 subfamily. In terms of assembly, homodimer.

It is found in the cytoplasm. The catalysed reaction is tRNA(Asx) + L-aspartate + ATP = L-aspartyl-tRNA(Asx) + AMP + diphosphate. Functionally, aspartyl-tRNA synthetase with relaxed tRNA specificity since it is able to aspartylate not only its cognate tRNA(Asp) but also tRNA(Asn). Reaction proceeds in two steps: L-aspartate is first activated by ATP to form Asp-AMP and then transferred to the acceptor end of tRNA(Asp/Asn). The chain is Aspartate--tRNA(Asp/Asn) ligase (aspS) from Paramagnetospirillum magneticum (strain ATCC 700264 / AMB-1) (Magnetospirillum magneticum).